The sequence spans 247 residues: GTP cyclohydrolase 1 type 2 homolog (247 aa).

The a divalent metal cation site is built by H63, H64, D101, H215, and E219.

Belongs to the GTP cyclohydrolase I type 2/NIF3 family. As to quaternary structure, homohexamer.

This Buchnera aphidicola subsp. Acyrthosiphon pisum (strain APS) (Acyrthosiphon pisum symbiotic bacterium) protein is GTP cyclohydrolase 1 type 2 homolog.